The chain runs to 282 residues: Formamidopyrimidine-DNA glycosylase (282 aa).

The Schiff-base intermediate with DNA role is filled by proline 2. Glutamate 3 (proton donor) is an active-site residue. Lysine 58 (proton donor; for beta-elimination activity) is an active-site residue. Residues histidine 96, arginine 115, and lysine 152 each contribute to the DNA site. Residues 238 to 272 (HVYGRGGQPCERCGEEILKTVLGGRGTHYCPSCQN) form an FPG-type zinc finger. Arginine 262 acts as the Proton donor; for delta-elimination activity in catalysis.

It belongs to the FPG family. As to quaternary structure, monomer. It depends on Zn(2+) as a cofactor.

It catalyses the reaction Hydrolysis of DNA containing ring-opened 7-methylguanine residues, releasing 2,6-diamino-4-hydroxy-5-(N-methyl)formamidopyrimidine.. The enzyme catalyses 2'-deoxyribonucleotide-(2'-deoxyribose 5'-phosphate)-2'-deoxyribonucleotide-DNA = a 3'-end 2'-deoxyribonucleotide-(2,3-dehydro-2,3-deoxyribose 5'-phosphate)-DNA + a 5'-end 5'-phospho-2'-deoxyribonucleoside-DNA + H(+). Its function is as follows. Involved in base excision repair of DNA damaged by oxidation or by mutagenic agents. Acts as a DNA glycosylase that recognizes and removes damaged bases. Has a preference for oxidized purines, such as 7,8-dihydro-8-oxoguanine (8-oxoG). Has AP (apurinic/apyrimidinic) lyase activity and introduces nicks in the DNA strand. Cleaves the DNA backbone by beta-delta elimination to generate a single-strand break at the site of the removed base with both 3'- and 5'-phosphates. This is Formamidopyrimidine-DNA glycosylase from Corynebacterium aurimucosum (strain ATCC 700975 / DSM 44827 / CIP 107346 / CN-1) (Corynebacterium nigricans).